The sequence spans 223 residues: Neurotrophic factor BDNF precursor form (223 aa).

The N-terminal stretch at 1-5 (SCMKA) is a signal peptide. Residues 6–114 (APMKEVSIRG…AANMSMRVRR (109 aa)) constitute a propeptide that is removed on maturation. N107 carries an N-linked (GlcNAc...) asparagine glycan. Disulfide bonds link C127–C194 and C172–C223.

The protein belongs to the NGF-beta family.

The protein localises to the secreted. Functionally, promotes the survival of neuronal populations that are all located either in the central nervous system or directly connected to it. This Boa constrictor (Boa) protein is Neurotrophic factor BDNF precursor form (BDNF).